Reading from the N-terminus, the 65-residue chain is Large ribosomal subunit protein bL33 (65 aa).

Residues 17-40 (SRSVPSSEKRSAGVSRYTTEKNRR) form a disordered region.

This sequence belongs to the bacterial ribosomal protein bL33 family.

The polypeptide is Large ribosomal subunit protein bL33 (Prochlorococcus marinus (strain NATL1A)).